Here is a 216-residue protein sequence, read N- to C-terminus: MGQKINPLGFRLGTTQGHHSIWFAQAKNYSDGLQEDQKIRNCIKNYLQKNMRISSGVEGIARIEIRKRIDLIQVIIYMGFPKLLLEGKTRRIEELQMNVQKELNCVNRKLNIAITRITNPYGHPNILAEFIAGQLKNRVSFRKAIKKAIELTEQADTKGIQVQIAGRLDGKEIARVEWMREGRVPLQTIRAKIDYCSYGVRTVYGVLGIKIWIFWE.

Residues 43 to 118 enclose the KH type-2 domain; sequence IKNYLQKNMR…KLNIAITRIT (76 aa).

It belongs to the universal ribosomal protein uS3 family. Part of the 30S ribosomal subunit.

The protein localises to the plastid. Its subcellular location is the chloroplast. In Eucalyptus globulus subsp. globulus (Tasmanian blue gum), this protein is Small ribosomal subunit protein uS3c (rps3).